A 158-amino-acid chain; its full sequence is Peptide methionine sulfoxide reductase MsrA (158 aa).

Cys-10 is a catalytic residue.

Belongs to the MsrA Met sulfoxide reductase family.

The enzyme catalyses L-methionyl-[protein] + [thioredoxin]-disulfide + H2O = L-methionyl-(S)-S-oxide-[protein] + [thioredoxin]-dithiol. It catalyses the reaction [thioredoxin]-disulfide + L-methionine + H2O = L-methionine (S)-S-oxide + [thioredoxin]-dithiol. Functionally, has an important function as a repair enzyme for proteins that have been inactivated by oxidation. Catalyzes the reversible oxidation-reduction of methionine sulfoxide in proteins to methionine. This chain is Peptide methionine sulfoxide reductase MsrA, found in Alkaliphilus metalliredigens (strain QYMF).